The sequence spans 346 residues: NADH-ubiquinone oxidoreductase chain 2 (346 aa).

The next 11 membrane-spanning stretches (helical) occupy residues 1–21, 25–45, 60–80, 96–116, 124–144, 149–169, 178–198, 200–220, 242–262, 274–294, and 325–345; these read MNPH…TITI, HWIM…PLIS, FLVQ…NAWA, MLLT…FWFP, LTTA…ILLM, LNPT…GWMG, ILAF…IYNP, LTLL…LSLN, AALM…GFMP, EMTT…FFYL, and IAIL…ILAA.

Belongs to the complex I subunit 2 family.

Its subcellular location is the mitochondrion inner membrane. It catalyses the reaction a ubiquinone + NADH + 5 H(+)(in) = a ubiquinol + NAD(+) + 4 H(+)(out). Its function is as follows. Core subunit of the mitochondrial membrane respiratory chain NADH dehydrogenase (Complex I) that is believed to belong to the minimal assembly required for catalysis. Complex I functions in the transfer of electrons from NADH to the respiratory chain. The immediate electron acceptor for the enzyme is believed to be ubiquinone. The chain is NADH-ubiquinone oxidoreductase chain 2 (MT-ND2) from Struthio camelus (Common ostrich).